A 376-amino-acid chain; its full sequence is Serine/threonine-protein kinase-transforming protein mos (376 aa).

A Protein kinase domain is found at 94–376 (VCLMHRLGSG…KALADSIEPM (283 aa)). ATP contacts are provided by residues 100-108 (LGSGGFGSV) and Lys121. Asp229 (proton acceptor) is an active-site residue.

Belongs to the protein kinase superfamily. Ser/Thr protein kinase family.

The catalysed reaction is L-seryl-[protein] + ATP = O-phospho-L-seryl-[protein] + ADP + H(+). It catalyses the reaction L-threonyl-[protein] + ATP = O-phospho-L-threonyl-[protein] + ADP + H(+). The chain is Serine/threonine-protein kinase-transforming protein mos (V-MOS) from Moloney murine sarcoma virus (strain m1) (MoMSV).